The following is a 213-amino-acid chain: Adenylate kinase (213 aa).

10–15 (GSGKGT) is an ATP binding site. The segment at 30–59 (STGDLFRTNIENDTPLGKEIKQIVENGQLV) is NMP. Residues Thr-31, Arg-36, 57 to 59 (QLV), 85 to 88 (GFPR), and Gln-92 contribute to the AMP site. Residues 121–158 (GRRICQSCCKIFNIYTLPTKEKEICDFCQGILYQRKDD) form an LID region. An ATP-binding site is contributed by Arg-122. 2 residues coordinate Zn(2+): Cys-125 and Cys-128. 131 to 132 (IF) serves as a coordination point for ATP. Zn(2+)-binding residues include Cys-145 and Cys-148. Residues Arg-155 and Arg-166 each coordinate AMP. Lys-194 is a binding site for ATP.

It belongs to the adenylate kinase family. As to quaternary structure, monomer.

It localises to the cytoplasm. It carries out the reaction AMP + ATP = 2 ADP. The protein operates within purine metabolism; AMP biosynthesis via salvage pathway; AMP from ADP: step 1/1. Functionally, catalyzes the reversible transfer of the terminal phosphate group between ATP and AMP. Plays an important role in cellular energy homeostasis and in adenine nucleotide metabolism. This Borrelia duttonii (strain Ly) protein is Adenylate kinase.